The chain runs to 259 residues: Phosphatidylglycerol--prolipoprotein diacylglyceryl transferase (259 aa).

The next 4 membrane-spanning stretches (helical) occupy residues leucine 12–alanine 32, isoleucine 46–valine 66, isoleucine 83–valine 103, and valine 109–isoleucine 129. Residue arginine 131 participates in a 1,2-diacyl-sn-glycero-3-phospho-(1'-sn-glycerol) binding. 3 helical membrane passes run valine 167–tryptophan 187, leucine 194–isoleucine 214, and glycine 226–phenylalanine 246.

The protein belongs to the Lgt family.

Its subcellular location is the cell membrane. The enzyme catalyses L-cysteinyl-[prolipoprotein] + a 1,2-diacyl-sn-glycero-3-phospho-(1'-sn-glycerol) = an S-1,2-diacyl-sn-glyceryl-L-cysteinyl-[prolipoprotein] + sn-glycerol 1-phosphate + H(+). Its pathway is protein modification; lipoprotein biosynthesis (diacylglyceryl transfer). Its function is as follows. Catalyzes the transfer of the diacylglyceryl group from phosphatidylglycerol to the sulfhydryl group of the N-terminal cysteine of a prolipoprotein, the first step in the formation of mature lipoproteins. The chain is Phosphatidylglycerol--prolipoprotein diacylglyceryl transferase from Streptococcus equi subsp. zooepidemicus (strain MGCS10565).